A 542-amino-acid chain; its full sequence is Phosphoacetylglucosamine mutase (542 aa).

At M1 the chain carries N-acetylmethionine. T62 is subject to Phosphothreonine. The active-site Phosphoserine intermediate is S64. Positions 64, 276, 278, and 280 each coordinate Mg(2+). The residue at position 64 (S64) is a Phosphoserine. Substrate contacts are provided by residues 370 to 372, 496 to 500, and R505; these read EAN and RPSGT.

The protein belongs to the phosphohexose mutase family. Mg(2+) is required as a cofactor. In terms of tissue distribution, found in many tissues except lung. Relatively high expression in pancreas, heart, liver, and placenta, and relatively low expression in brain, skeletal muscle and kidney.

The enzyme catalyses N-acetyl-alpha-D-glucosamine 1-phosphate = N-acetyl-D-glucosamine 6-phosphate. It participates in nucleotide-sugar biosynthesis; UDP-N-acetyl-alpha-D-glucosamine biosynthesis; N-acetyl-alpha-D-glucosamine 1-phosphate from alpha-D-glucosamine 6-phosphate (route I): step 2/2. Functionally, catalyzes the conversion of GlcNAc-6-P into GlcNAc-1-P during the synthesis of uridine diphosphate/UDP-GlcNAc, a sugar nucleotide critical to multiple glycosylation pathways including protein N- and O-glycosylation. In Homo sapiens (Human), this protein is Phosphoacetylglucosamine mutase.